The sequence spans 595 residues: Probable inactive glycosyltransferase 25 family member 3 (595 aa).

An N-terminal signal peptide occupies residues 1 to 24; it reads MRAAPAAPLLQLLLLLGPRPEAAG. N-linked (GlcNAc...) asparagine glycans are attached at residues Asn75, Asn153, Asn237, and Asn360. Residues 576–595 are disordered; it reads RLDLAGGSGHSLRPHPRDEL. The Prevents secretion from ER signature appears at 592–595; it reads RDEL.

The protein belongs to the glycosyltransferase 25 family.

It localises to the endoplasmic reticulum lumen. In terms of biological role, probable cell adhesion protein involved in leukocyte transmigration across the blood-brain barrier. Does not express any beta-galactosyltransferase activity in vitro. The chain is Probable inactive glycosyltransferase 25 family member 3 (CERCAM) from Bos taurus (Bovine).